A 215-amino-acid chain; its full sequence is Elongation factor Ts (215 aa).

Residues 80-83 (TDFA) are involved in Mg(2+) ion dislocation from EF-Tu.

This sequence belongs to the EF-Ts family.

It localises to the cytoplasm. Its function is as follows. Associates with the EF-Tu.GDP complex and induces the exchange of GDP to GTP. It remains bound to the aminoacyl-tRNA.EF-Tu.GTP complex up to the GTP hydrolysis stage on the ribosome. In Acetivibrio thermocellus (strain ATCC 27405 / DSM 1237 / JCM 9322 / NBRC 103400 / NCIMB 10682 / NRRL B-4536 / VPI 7372) (Clostridium thermocellum), this protein is Elongation factor Ts.